A 309-amino-acid chain; its full sequence is MDYVSPGHSVLLLWGGAVSGDTIQTTVGNLQTKVGEKGHVRVEHVDRLLLSNHGSSTFDVVMSGTINPPTTVHSGDVLAEVARLLKPSGRAVVCEPTVSTDNGGTLRTAAKLSSSLKLAGLVSVSEAKEVSLSQQEHDLLKQALSVDGIQVVEVSASKPSYEVGSSAQLTLSFAKKKQVEKPKLDENTAKIWSLSAVDMNDDDIDLLDPDELLDEEDLKKPDPASLKAQCGTGGDTKKRKACKNCTCGLAEELEGDQPGKTASKPATSACGNCYLGDAFRCASCPYLGMPAFKPGEKITLTDRQLKGDI.

Residues 4–169 form an N-terminal SAM-like domain region; the sequence is VSPGHSVLLL…SYEVGSSAQL (166 aa). The tract at residues 170-218 is linker; sequence TLSFAKKKQVEKPKLDENTAKIWSLSAVDMNDDDIDLLDPDELLDEEDL. [2Fe-2S] cluster is bound by residues C230, C242, C245, and C247. The tract at residues 230 to 247 is fe-S binding site A; the sequence is CGTGGDTKKRKACKNCTC. 4 residues coordinate [4Fe-4S] cluster: C270, C273, C281, and C284. 2 short sequence motifs (cx2C motif) span residues 270–273 and 281–284; these read CGNC and CASC. The fe-S binding site B stretch occupies residues 270-284; that stretch reads CGNCYLGDAFRCASC.

It belongs to the anamorsin family. As to quaternary structure, monomer. The cofactor is [2Fe-2S] cluster. [4Fe-4S] cluster is required as a cofactor.

Its subcellular location is the cytoplasm. It localises to the mitochondrion intermembrane space. Its function is as follows. Component of the cytosolic iron-sulfur (Fe-S) protein assembly (CIA) machinery. Required for the maturation of extramitochondrial Fe-S proteins. Part of an electron transfer chain functioning in an early step of cytosolic Fe-S biogenesis, facilitating the de novo assembly of a [4Fe-4S] cluster on the cytosolic Fe-S scaffold complex. Electrons are transferred from NADPH via a FAD- and FMN-containing diflavin oxidoreductase. Together with the diflavin oxidoreductase, also required for the assembly of the diferric tyrosyl radical cofactor of ribonucleotide reductase (RNR), probably by providing electrons for reduction during radical cofactor maturation in the catalytic small subunit. The chain is Anamorsin homolog from Branchiostoma floridae (Florida lancelet).